Reading from the N-terminus, the 425-residue chain is Enolase (425 aa).

Position 162 (Gln-162) interacts with (2R)-2-phosphoglycerate. The active-site Proton donor is Glu-204. Residues Asp-241, Glu-284, and Asp-311 each coordinate Mg(2+). Residues Lys-336, Arg-365, Ser-366, and Lys-387 each coordinate (2R)-2-phosphoglycerate. Lys-336 serves as the catalytic Proton acceptor.

Belongs to the enolase family. Mg(2+) is required as a cofactor.

Its subcellular location is the cytoplasm. It is found in the secreted. The protein localises to the cell surface. It catalyses the reaction (2R)-2-phosphoglycerate = phosphoenolpyruvate + H2O. The protein operates within carbohydrate degradation; glycolysis; pyruvate from D-glyceraldehyde 3-phosphate: step 4/5. Its function is as follows. Catalyzes the reversible conversion of 2-phosphoglycerate (2-PG) into phosphoenolpyruvate (PEP). It is essential for the degradation of carbohydrates via glycolysis. The protein is Enolase of Brucella melitensis biotype 2 (strain ATCC 23457).